The primary structure comprises 25 residues: Css54 (25 aa).

In terms of tissue distribution, expressed by the venom gland.

It is found in the secreted. It localises to the target cell membrane. Functionally, amphipathic peptide that shows antibacterial activity against E.coli (MIC=12.5 ug/ml) and S.aureus (MIC=12.5 ug/ml). Has hemolytic activity against human erythrocytes (25 uM provokes 83% of hemolysis). May act by disrupting the integrity of the bacterial cell membrane. Increases efficacy of antibiotics (ethambutol, pyrazinamide, isoniazid, rifampicin) when tested against S.aureus, probably by facilitating their incorporation into the bacteria. The polypeptide is Css54 (Centruroides suffusus (Durango bark scorpion)).